A 380-amino-acid polypeptide reads, in one-letter code: Phospho-N-acetylmuramoyl-pentapeptide-transferase (380 aa).

11 helical membrane passes run 26–46 (IVAA…LFIE), 75–95 (MGGA…ADLG), 98–118 (LVWA…WDDW), 135–155 (LVLQ…DWQP), 160–180 (GFPF…PFVP), 183–203 (LFSP…VVAT), 222–242 (IVSS…IAGF), 259–279 (LGVF…YNTY), 283–303 (VFMG…LAVL), 311–331 (AILH…VWSF), and 357–377 (KIIV…LMSL).

This sequence belongs to the glycosyltransferase 4 family. MraY subfamily. Mg(2+) is required as a cofactor.

It localises to the cell inner membrane. The enzyme catalyses UDP-N-acetyl-alpha-D-muramoyl-L-alanyl-gamma-D-glutamyl-meso-2,6-diaminopimeloyl-D-alanyl-D-alanine + di-trans,octa-cis-undecaprenyl phosphate = di-trans,octa-cis-undecaprenyl diphospho-N-acetyl-alpha-D-muramoyl-L-alanyl-D-glutamyl-meso-2,6-diaminopimeloyl-D-alanyl-D-alanine + UMP. It participates in cell wall biogenesis; peptidoglycan biosynthesis. Functionally, catalyzes the initial step of the lipid cycle reactions in the biosynthesis of the cell wall peptidoglycan: transfers peptidoglycan precursor phospho-MurNAc-pentapeptide from UDP-MurNAc-pentapeptide onto the lipid carrier undecaprenyl phosphate, yielding undecaprenyl-pyrophosphoryl-MurNAc-pentapeptide, known as lipid I. The chain is Phospho-N-acetylmuramoyl-pentapeptide-transferase from Anaeromyxobacter sp. (strain Fw109-5).